A 634-amino-acid polypeptide reads, in one-letter code: Threonine--tRNA ligase (634 aa).

A TGS domain is found at 1–61 (MINITLPDGS…DHDASLRIIT (61 aa)). Positions 243–534 (DHRRIGKAQD…LIEHHAGAFP (292 aa)) are catalytic. Zn(2+) contacts are provided by Cys-334, His-385, and His-511.

This sequence belongs to the class-II aminoacyl-tRNA synthetase family. In terms of assembly, homodimer. It depends on Zn(2+) as a cofactor.

It localises to the cytoplasm. The catalysed reaction is tRNA(Thr) + L-threonine + ATP = L-threonyl-tRNA(Thr) + AMP + diphosphate + H(+). Its function is as follows. Catalyzes the attachment of threonine to tRNA(Thr) in a two-step reaction: L-threonine is first activated by ATP to form Thr-AMP and then transferred to the acceptor end of tRNA(Thr). Also edits incorrectly charged L-seryl-tRNA(Thr). The sequence is that of Threonine--tRNA ligase from Xanthomonas axonopodis pv. citri (strain 306).